A 501-amino-acid chain; its full sequence is Glycerol kinase (501 aa).

Threonine 12 lines the ADP pocket. The ATP site is built by threonine 12, threonine 13, and serine 14. Threonine 12 lines the sn-glycerol 3-phosphate pocket. Arginine 16 contacts ADP. Sn-glycerol 3-phosphate is bound by residues arginine 82, glutamate 83, tyrosine 134, and aspartate 244. Positions 82, 83, 134, 244, and 245 each coordinate glycerol. Threonine 266 and glycine 310 together coordinate ADP. ATP-binding residues include threonine 266, glycine 310, glutamine 314, and glycine 411. ADP is bound by residues glycine 411 and asparagine 415.

It belongs to the FGGY kinase family.

It catalyses the reaction glycerol + ATP = sn-glycerol 3-phosphate + ADP + H(+). It functions in the pathway polyol metabolism; glycerol degradation via glycerol kinase pathway; sn-glycerol 3-phosphate from glycerol: step 1/1. Inhibited by fructose 1,6-bisphosphate (FBP). Functionally, key enzyme in the regulation of glycerol uptake and metabolism. Catalyzes the phosphorylation of glycerol to yield sn-glycerol 3-phosphate. This is Glycerol kinase from Methylobacterium radiotolerans (strain ATCC 27329 / DSM 1819 / JCM 2831 / NBRC 15690 / NCIMB 10815 / 0-1).